Reading from the N-terminus, the 398-residue chain is Lipoyl synthase, mitochondrial (398 aa).

Residues 1–32 (MIALRVHNTRVVSRSLTVWTRPSPTLTLSRSL) constitute a mitochondrion transit peptide. 7 residues coordinate [4Fe-4S] cluster: Cys117, Cys122, Cys128, Cys147, Cys151, Cys154, and Ser362. The Radical SAM core domain maps to 132–351 (KKSEATATIM…RDTALEMGFL (220 aa)).

Belongs to the radical SAM superfamily. Lipoyl synthase family. It depends on [4Fe-4S] cluster as a cofactor.

Its subcellular location is the mitochondrion. It carries out the reaction [[Fe-S] cluster scaffold protein carrying a second [4Fe-4S](2+) cluster] + N(6)-octanoyl-L-lysyl-[protein] + 2 oxidized [2Fe-2S]-[ferredoxin] + 2 S-adenosyl-L-methionine + 4 H(+) = [[Fe-S] cluster scaffold protein] + N(6)-[(R)-dihydrolipoyl]-L-lysyl-[protein] + 4 Fe(3+) + 2 hydrogen sulfide + 2 5'-deoxyadenosine + 2 L-methionine + 2 reduced [2Fe-2S]-[ferredoxin]. It participates in protein modification; protein lipoylation via endogenous pathway; protein N(6)-(lipoyl)lysine from octanoyl-[acyl-carrier-protein]: step 2/2. Its function is as follows. Catalyzes the radical-mediated insertion of two sulfur atoms into the C-6 and C-8 positions of the octanoyl moiety bound to the lipoyl domains of lipoate-dependent enzymes, thereby converting the octanoylated domains into lipoylated derivatives. In Scheffersomyces stipitis (strain ATCC 58785 / CBS 6054 / NBRC 10063 / NRRL Y-11545) (Yeast), this protein is Lipoyl synthase, mitochondrial.